The sequence spans 89 residues: Small ribosomal subunit protein uS15 (89 aa).

It belongs to the universal ribosomal protein uS15 family. As to quaternary structure, part of the 30S ribosomal subunit. Forms a bridge to the 50S subunit in the 70S ribosome, contacting the 23S rRNA.

Its function is as follows. One of the primary rRNA binding proteins, it binds directly to 16S rRNA where it helps nucleate assembly of the platform of the 30S subunit by binding and bridging several RNA helices of the 16S rRNA. Functionally, forms an intersubunit bridge (bridge B4) with the 23S rRNA of the 50S subunit in the ribosome. This is Small ribosomal subunit protein uS15 from Pectobacterium carotovorum subsp. carotovorum (strain PC1).